Reading from the N-terminus, the 184-residue chain is 20.9 kDa protein (184 aa).

The protein is 20.9 kDa protein of Zymomonas mobilis subsp. mobilis (strain ATCC 10988 / DSM 424 / LMG 404 / NCIMB 8938 / NRRL B-806 / ZM1).